Reading from the N-terminus, the 2273-residue chain is KGKTITHGQSWGARRIHSHFYITIFTITCIRIGQYKLALYLDPYRFYNITGSQIVRLKGQRPEYRKRIFAHSYRHSSRIGLNFPSRRRYSNYVDRGNIHKHTRLPPQFIGLNTVESAQPSILRDFVDLRGGHTVISKILIANNGIAAVKEMRSIRKWAYETFNDEKIIQFVVMATPDDLHANSEYIRMADQYVQVPGGTNNNNYANIDLILDVAEQTDVDAVWAGWGHASENPCLPELLASSQRKILFIGPPGRAMRSLGDKISSTIVAQSAKIPCIPWSGSHIDTIHIDNKTNFVSVPDDVYVRGCCSSPEDALEKAKLIGFPVMIKASEGGGGKGIRRVDNQDDFIALYRQAVNETPGSPMFVMKVVTDARHLEVQLLADQYGTNITLFGRDCSIQRRHQKIIEEAPVTITKPETFQRMERAAIRLGELVGYVSAGTVEYLYSPKDDKFYFLELNPRLQVEHPTTEMISGVNLPATQLQIAMGIPMHMISDIRKLYGLDPTGTSYIDFKNLKRPSPKGHCISCRITSEDPNEGFKPSTGKIHELNFRSSSNVWGYFSVGNNGAIHSFSDSQFGHIFAVGNDRQDAKQNMVLALKDFSIRGEFKTPIEYLTELLETRDFESNNISTGWLDDLILKNLSSDSKLDPTLAIICGAAMKAYVFTEKVRNKYLELLRRGQVPPKDFLKTKFPVDFIFDNNKYLFNVAQSSEEQFILSINKSQCEVNVQKLSSDCLLISVDGKCHTVYWKDDIRGTRLSIDSNTIFLEAELNPTQVISPTPGKLVKYLVRSGDHVFAGQQYAEIEIMKMQMPLVAKSDGVIELLRQPGSIIEAGDVIAKLTLDSPSKANESSLYRGELPVLGPPLIEGSRPNHKLRVLINRLENILNGYHENSGIETTLKELIKILRDGRLPYSEWDSQISTVRNRLPRQLNEGLGNLVKKSVSFPAKELHKLMKRYLEENTNDHVVYVALQPLLKISERYSEGLANHECEIFLKLIKKYYAVEKIFENHDIHEERNLLNLRRKDLTNLKEILCISLSHANIVAKNKLVTAILHEYEPLCQDSSKMSLKFRAVIHDLASLESKWAKEVAVKARSVLLRGIFPPIKKRKEHIKTLLQLHIKDTGAENIHSRNIYSCMRDFGNLIHSNLIQLQDLFFFFGHQDTALSSIASEIYARYAYGNYQLKSIKIHKGAPDLLMSWQFSSLRNYLVNPDGESDGFTKLSKPPSTSGKSSANSFGLLVNMRALESLEKTLDEVYEQIHIPEERLSSGENSLIVNILSPIRYRSENDLIKTLKIKLHENERGLSKLKVNRITFAFIAANAPAVKFYSFDGTTYDEIPQIRNMDPSYEAPLELGKMSNYKIRSLPTYDSSIRIFEGISKFTPLDKRFFVRKIINSFMYNDQKTTEENLKAEINAQVVYMLEHLGAVDISNSDLNHIFLSFNTVLNIPVHRLEEIVSTILKTHETRLFQERITDVEICISVECLETKKPAPLRLLISNKSGYVVKIETYYEKIGKNGNLILEPCSEQSHYSQKSLSLPYSVKDWLQPKRYKAQFMGTTYVYDFPGLFHQAAIQQWKRYFPKHKLNDSFFSWVELIEQNGNLIKVNREPGLNNIGMVAFEIMVQTPEYPEGRNMIVISNDITYNIGSFGPREDLFFDRVTNYARERGIPRIYLAANSGAKLGIAEELIPLFRVAWNDPSDPTKGFQYLYLAPKDMQLLKDSGKGNSVVVEHKMVYGEERYIIKAIVGFEEGLGVECLQGSGLIAGATSKAYREIFTITAVTCRSVGIGSYLVRLGQRTIQVEDKPIILTGASAINKVLGTDIYISNLQIGGTQIMYKNGIAHLTASNDMKAIEKIMTWLSYVPAKRDMSPPLLETMDRWDRDVDFKPAKQVPYEARWLIEGKWDSNNNFQSGLFDKDSFFETLSGWAKGVIVGRARLGGIPVGVIAVETKTIEEIIPADPANLDSSEFSVKEAGQVWYPNSAFKTAQTINDFNYGEQLPLIILANWRGFSGGQRDMYNEVLKYGSFIVDALVDYKQPILIYIPPFGELRGGSWVVIDPTINPEQMEMYADVESRGGVLEPDGVVSIKYRKEKMIETMIRLDSTYGHLRRTLTEKKLSLEKQNDLTKRLKIRERQLIPIYNQISIQFADLHDRSTRMLVKGVIRNELEWKKSRRFLYWRLRRRLNEGQVIKRLQKKTCDNKTKMKYDDLLKIVQSWYNDLDVNDDRAVVEFIERNSKKIDKNIEEFEISLLIDELKKKFEDRRGNIVLEELTRLVDSKRKR.

Residues 1 to 104 (KGKTITHGQS…RGNIHKHTRL (104 aa)) constitute a mitochondrion transit peptide. Residues 134-635 (VISKILIANN…STGWLDDLIL (502 aa)) enclose the Biotin carboxylation domain. The ATP-grasp domain maps to 292 to 484 (KTNFVSVPDD…LPATQLQIAM (193 aa)). ATP is bound at residue 332–337 (GGGGKG). Arg459 is an active-site residue. Residues 763–837 (LEAELNPTQV…EAGDVIAKLT (75 aa)) form the Biotinyl-binding domain. Lys804 carries the post-translational modification N6-biotinyllysine. One can recognise a CoA carboxyltransferase N-terminal domain in the interval 1532–1867 (PYSVKDWLQP…KRDMSPPLLE (336 aa)). Residues 1532 to 2187 (PYSVKDWLQP…EGQVIKRLQK (656 aa)) form a carboxyltransferase region. CoA-binding residues include Arg1776, Lys2080, and Arg2082. In terms of domain architecture, CoA carboxyltransferase C-terminal spans 1871 to 2187 (RWDRDVDFKP…EGQVIKRLQK (317 aa)).

It depends on biotin as a cofactor.

The protein resides in the mitochondrion. It carries out the reaction hydrogencarbonate + acetyl-CoA + ATP = malonyl-CoA + ADP + phosphate + H(+). It catalyses the reaction N(6)-biotinyl-L-lysyl-[protein] + hydrogencarbonate + ATP = N(6)-carboxybiotinyl-L-lysyl-[protein] + ADP + phosphate + H(+). The protein operates within lipid metabolism; malonyl-CoA biosynthesis; malonyl-CoA from acetyl-CoA: step 1/1. Catalyzes the rate-limiting reaction in the mitochondrial fatty acid synthesis (FAS) type II pathway. Responsible for the production of the mitochondrial malonyl-CoA, used for the biosynthesis of the cofactor lipoic acid. This protein carries three functions: biotin carboxyl carrier protein, biotin carboxylase, and carboxyltransferase. The protein is Acetyl-CoA carboxylase, mitochondrial (HFA1) of Saccharomyces cerevisiae (strain RM11-1a) (Baker's yeast).